The chain runs to 394 residues: Phosphopentomutase (394 aa).

Residues D14, D287, H292, D328, H329, and H340 each coordinate Mn(2+).

The protein belongs to the phosphopentomutase family. Requires Mn(2+) as cofactor.

It is found in the cytoplasm. The enzyme catalyses 2-deoxy-alpha-D-ribose 1-phosphate = 2-deoxy-D-ribose 5-phosphate. It catalyses the reaction alpha-D-ribose 1-phosphate = D-ribose 5-phosphate. It participates in carbohydrate degradation; 2-deoxy-D-ribose 1-phosphate degradation; D-glyceraldehyde 3-phosphate and acetaldehyde from 2-deoxy-alpha-D-ribose 1-phosphate: step 1/2. In terms of biological role, isomerase that catalyzes the conversion of deoxy-ribose 1-phosphate (dRib-1-P) and ribose 1-phosphate (Rib-1-P) to deoxy-ribose 5-phosphate (dRib-5-P) and ribose 5-phosphate (Rib-5-P), respectively. The protein is Phosphopentomutase of Listeria monocytogenes serotype 4a (strain HCC23).